Consider the following 227-residue polypeptide: Cytochrome c oxidase subunit 2 (227 aa).

Residues 1-14 (MAHAAQVGLQDATS) are Mitochondrial intermembrane-facing. The chain crosses the membrane as a helical span at residues 15–45 (PIMEELVIFHDHALMIIFLICFLVLYALFLT). Topologically, residues 46–59 (LTTKLTNTSISDAQ) are mitochondrial matrix. Residues 60 to 87 (EMETIWTILPAIILILIALPSLRILYLT) traverse the membrane as a helical segment. Residues 88–227 (DEINDPSFTI…IFEMGPVFTL (140 aa)) are Mitochondrial intermembrane-facing. Cu cation-binding residues include His161, Cys196, Glu198, Cys200, His204, and Met207. Mg(2+) is bound at residue Glu198.

The protein belongs to the cytochrome c oxidase subunit 2 family. Component of the cytochrome c oxidase (complex IV, CIV), a multisubunit enzyme composed of 14 subunits. The complex is composed of a catalytic core of 3 subunits MT-CO1, MT-CO2 and MT-CO3, encoded in the mitochondrial DNA, and 11 supernumerary subunits COX4I, COX5A, COX5B, COX6A, COX6B, COX6C, COX7A, COX7B, COX7C, COX8 and NDUFA4, which are encoded in the nuclear genome. The complex exists as a monomer or a dimer and forms supercomplexes (SCs) in the inner mitochondrial membrane with NADH-ubiquinone oxidoreductase (complex I, CI) and ubiquinol-cytochrome c oxidoreductase (cytochrome b-c1 complex, complex III, CIII), resulting in different assemblies (supercomplex SCI(1)III(2)IV(1) and megacomplex MCI(2)III(2)IV(2)). Found in a complex with TMEM177, COA6, COX18, COX20, SCO1 and SCO2. Interacts with TMEM177 in a COX20-dependent manner. Interacts with COX20. Interacts with COX16. Cu cation serves as cofactor.

The protein localises to the mitochondrion inner membrane. The enzyme catalyses 4 Fe(II)-[cytochrome c] + O2 + 8 H(+)(in) = 4 Fe(III)-[cytochrome c] + 2 H2O + 4 H(+)(out). Its function is as follows. Component of the cytochrome c oxidase, the last enzyme in the mitochondrial electron transport chain which drives oxidative phosphorylation. The respiratory chain contains 3 multisubunit complexes succinate dehydrogenase (complex II, CII), ubiquinol-cytochrome c oxidoreductase (cytochrome b-c1 complex, complex III, CIII) and cytochrome c oxidase (complex IV, CIV), that cooperate to transfer electrons derived from NADH and succinate to molecular oxygen, creating an electrochemical gradient over the inner membrane that drives transmembrane transport and the ATP synthase. Cytochrome c oxidase is the component of the respiratory chain that catalyzes the reduction of oxygen to water. Electrons originating from reduced cytochrome c in the intermembrane space (IMS) are transferred via the dinuclear copper A center (CU(A)) of subunit 2 and heme A of subunit 1 to the active site in subunit 1, a binuclear center (BNC) formed by heme A3 and copper B (CU(B)). The BNC reduces molecular oxygen to 2 water molecules using 4 electrons from cytochrome c in the IMS and 4 protons from the mitochondrial matrix. The polypeptide is Cytochrome c oxidase subunit 2 (MT-CO2) (Pongo abelii (Sumatran orangutan)).